The primary structure comprises 169 residues: Lipoprotein signal peptidase (169 aa).

Transmembrane regions (helical) follow at residues 4–24 (PICSTGLRWLWLAVLVVIVDL), 42–62 (LIPFFNLTYAQNFGAAFSFLA), 70–90 (WFFAGIAIGISVLLMVLMYRS), and 102–122 (ALIIGGALGNLFDRMVHGAVI). Residues Asp123 and Asp141 contribute to the active site. Residues 137 to 157 (FNIADTAICIGAALVIFEGFI) traverse the membrane as a helical segment.

This sequence belongs to the peptidase A8 family.

Its subcellular location is the cell inner membrane. It catalyses the reaction Release of signal peptides from bacterial membrane prolipoproteins. Hydrolyzes -Xaa-Yaa-Zaa-|-(S,diacylglyceryl)Cys-, in which Xaa is hydrophobic (preferably Leu), and Yaa (Ala or Ser) and Zaa (Gly or Ala) have small, neutral side chains.. It participates in protein modification; lipoprotein biosynthesis (signal peptide cleavage). This protein specifically catalyzes the removal of signal peptides from prolipoproteins. The protein is Lipoprotein signal peptidase of Yersinia enterocolitica serotype O:8 / biotype 1B (strain NCTC 13174 / 8081).